Reading from the N-terminus, the 344-residue chain is Dihydroorotate dehydrogenase (quinone) (344 aa).

Residues 62-66 (AGLDK) and Thr-86 contribute to the FMN site. Position 66 (Lys-66) interacts with substrate. 111–115 (NRMGF) contributes to the substrate binding site. FMN is bound by residues Asn-139 and Asn-172. Asn-172 is a binding site for substrate. Ser-175 functions as the Nucleophile in the catalytic mechanism. Asn-177 serves as a coordination point for substrate. FMN-binding residues include Lys-217 and Thr-245. 246 to 247 (NT) contacts substrate. Residues Gly-268, Gly-297, and 318 to 319 (YS) each bind FMN.

It belongs to the dihydroorotate dehydrogenase family. Type 2 subfamily. Monomer. It depends on FMN as a cofactor.

Its subcellular location is the cell membrane. It carries out the reaction (S)-dihydroorotate + a quinone = orotate + a quinol. It functions in the pathway pyrimidine metabolism; UMP biosynthesis via de novo pathway; orotate from (S)-dihydroorotate (quinone route): step 1/1. Functionally, catalyzes the conversion of dihydroorotate to orotate with quinone as electron acceptor. This chain is Dihydroorotate dehydrogenase (quinone), found in Chromobacterium violaceum (strain ATCC 12472 / DSM 30191 / JCM 1249 / CCUG 213 / NBRC 12614 / NCIMB 9131 / NCTC 9757 / MK).